Reading from the N-terminus, the 1047-residue chain is Ribonucleoside-diphosphate reductase subunit alpha (1047 aa).

ATP-cone domains follow at residues 9–111 (CTIV…KAHR), 118–219 (LSVI…ARVR), and 237–327 (FEVL…EALD). Residues Thr-442, 457 to 458 (SC), Gly-486, 670 to 674 (NLCTE), and 857 to 861 (PTATI) each bind substrate. Cysteines 458 and 687 form a disulfide. Asn-670 serves as the catalytic Proton acceptor. Cys-672 serves as the catalytic Cysteine radical intermediate. Residue Glu-674 is the Proton acceptor of the active site.

It belongs to the ribonucleoside diphosphate reductase large chain family. As to quaternary structure, tetramer of two alpha and two beta subunits.

The catalysed reaction is a 2'-deoxyribonucleoside 5'-diphosphate + [thioredoxin]-disulfide + H2O = a ribonucleoside 5'-diphosphate + [thioredoxin]-dithiol. Its activity is regulated as follows. Under complex allosteric control mediated by deoxynucleoside triphosphates and ATP binding. The type of nucleotide bound at the specificity site determines substrate preference. It seems probable that ATP makes the enzyme reduce CDP and UDP, dGTP favors ADP reduction and dTTP favors GDP reduction. Provides the precursors necessary for DNA synthesis. Catalyzes the biosynthesis of deoxyribonucleotides from the corresponding ribonucleotides. The chain is Ribonucleoside-diphosphate reductase subunit alpha (nrdA) from Chlamydia muridarum (strain MoPn / Nigg).